The primary structure comprises 279 residues: Tryptophan 2,3-dioxygenase (279 aa).

Substrate-binding positions include 48-52 (FIVIH), Tyr-110, and Arg-114. His-237 serves as a coordination point for heme. Position 251 (Thr-251) interacts with substrate.

It belongs to the tryptophan 2,3-dioxygenase family. Homotetramer. Heme serves as cofactor.

The catalysed reaction is L-tryptophan + O2 = N-formyl-L-kynurenine. Its pathway is amino-acid degradation; L-tryptophan degradation via kynurenine pathway; L-kynurenine from L-tryptophan: step 1/2. Functionally, heme-dependent dioxygenase that catalyzes the oxidative cleavage of the L-tryptophan (L-Trp) pyrrole ring and converts L-tryptophan to N-formyl-L-kynurenine. Catalyzes the oxidative cleavage of the indole moiety. The protein is Tryptophan 2,3-dioxygenase of Bacillus thuringiensis subsp. konkukian (strain 97-27).